The primary structure comprises 317 residues: Acetyl-coenzyme A carboxylase carboxyl transferase subunit alpha (317 aa).

The 254-residue stretch at 40–293 folds into the CoA carboxyltransferase C-terminal domain; it reads LEKRSADALK…GDIIAASLRS (254 aa).

The protein belongs to the AccA family. In terms of assembly, acetyl-CoA carboxylase is a heterohexamer composed of biotin carboxyl carrier protein (AccB), biotin carboxylase (AccC) and two subunits each of ACCase subunit alpha (AccA) and ACCase subunit beta (AccD).

The protein localises to the cytoplasm. The enzyme catalyses N(6)-carboxybiotinyl-L-lysyl-[protein] + acetyl-CoA = N(6)-biotinyl-L-lysyl-[protein] + malonyl-CoA. The protein operates within lipid metabolism; malonyl-CoA biosynthesis; malonyl-CoA from acetyl-CoA: step 1/1. Its function is as follows. Component of the acetyl coenzyme A carboxylase (ACC) complex. First, biotin carboxylase catalyzes the carboxylation of biotin on its carrier protein (BCCP) and then the CO(2) group is transferred by the carboxyltransferase to acetyl-CoA to form malonyl-CoA. In Brucella canis (strain ATCC 23365 / NCTC 10854 / RM-666), this protein is Acetyl-coenzyme A carboxylase carboxyl transferase subunit alpha.